A 332-amino-acid polypeptide reads, in one-letter code: Fructose-1,6-bisphosphatase class 1 (332 aa).

Mg(2+)-binding residues include Glu89, Asp110, Leu112, and Asp113. Substrate-binding positions include Asp113–Ser116, Asn206, Tyr239, Tyr257–Tyr259, and Lys269. Glu275 serves as a coordination point for Mg(2+).

It belongs to the FBPase class 1 family. As to quaternary structure, homotetramer. The cofactor is Mg(2+).

It is found in the cytoplasm. It catalyses the reaction beta-D-fructose 1,6-bisphosphate + H2O = beta-D-fructose 6-phosphate + phosphate. It functions in the pathway carbohydrate biosynthesis; gluconeogenesis. In Salmonella typhi, this protein is Fructose-1,6-bisphosphatase class 1.